We begin with the raw amino-acid sequence, 263 residues long: L-histidine 2-aminobutanoyltransferase (263 aa).

The protein belongs to the methyltransferase superfamily. CntL family.

The enzyme catalyses L-histidine + S-adenosyl-L-methionine = (2S)-2-amino-4-{[(1S)-1-carboxy-2-(1H-imidazol-4-yl)ethyl]amino}butanoate + S-methyl-5'-thioadenosine + H(+). Functionally, catalyzes the nucleophilic attack of one alpha-aminobutanoate moiety from SAM onto L-histidine to produce the intermediate (2S)-2-amino-4-{[(1S)-1-carboxy-2-(1H-imidazol-4-yl)ethyl]amino}butanoate. Functions in the biosynthesis of the metallophore pseudopaline, which is involved in the acquisition of nickel and zinc, and thus enables bacterial growth inside the host, where metal access is limited. Therefore, this enzyme probably contributes to Pseudomonas virulence. Appears to be specific for L-histidine as substrate. This is L-histidine 2-aminobutanoyltransferase from Pseudomonas aeruginosa (strain ATCC 15692 / DSM 22644 / CIP 104116 / JCM 14847 / LMG 12228 / 1C / PRS 101 / PAO1).